The following is a 177-amino-acid chain: ATP-dependent protease subunit HslV (177 aa).

Thr2 is an active-site residue. Na(+) is bound by residues Gly157, Cys160, and Thr163.

This sequence belongs to the peptidase T1B family. HslV subfamily. In terms of assembly, a double ring-shaped homohexamer of HslV is capped on each side by a ring-shaped HslU homohexamer. The assembly of the HslU/HslV complex is dependent on binding of ATP.

The protein resides in the cytoplasm. It catalyses the reaction ATP-dependent cleavage of peptide bonds with broad specificity.. Allosterically activated by HslU binding. Protease subunit of a proteasome-like degradation complex believed to be a general protein degrading machinery. This Aeromonas hydrophila subsp. hydrophila (strain ATCC 7966 / DSM 30187 / BCRC 13018 / CCUG 14551 / JCM 1027 / KCTC 2358 / NCIMB 9240 / NCTC 8049) protein is ATP-dependent protease subunit HslV.